The primary structure comprises 118 residues: UPF0102 protein Cphy_2398 (118 aa).

The protein belongs to the UPF0102 family.

The chain is UPF0102 protein Cphy_2398 from Lachnoclostridium phytofermentans (strain ATCC 700394 / DSM 18823 / ISDg) (Clostridium phytofermentans).